The following is a 168-amino-acid chain: Photosystem I assembly protein Ycf3 (168 aa).

TPR repeat units lie at residues 35–68 (AFTY…EIDP), 72–105 (SYIL…NPFL), and 120–153 (GEQA…TPGN).

This sequence belongs to the Ycf3 family.

Its subcellular location is the plastid. It localises to the chloroplast thylakoid membrane. Its function is as follows. Essential for the assembly of the photosystem I (PSI) complex. May act as a chaperone-like factor to guide the assembly of the PSI subunits. The protein is Photosystem I assembly protein Ycf3 of Ipomoea purpurea (Common morning glory).